The primary structure comprises 312 residues: Malate dehydrogenase (312 aa).

NAD(+)-binding positions include G7 to G13 and D34. R81 and R87 together coordinate substrate. Residues N94 and I117–N119 contribute to the NAD(+) site. 2 residues coordinate substrate: N119 and R153. Catalysis depends on H177, which acts as the Proton acceptor. M227 is a binding site for NAD(+).

It belongs to the LDH/MDH superfamily. MDH type 1 family. As to quaternary structure, homodimer.

The enzyme catalyses (S)-malate + NAD(+) = oxaloacetate + NADH + H(+). Functionally, catalyzes the reversible oxidation of malate to oxaloacetate. The polypeptide is Malate dehydrogenase (Escherichia coli O139:H28 (strain E24377A / ETEC)).